A 402-amino-acid chain; its full sequence is Type II NADH:quinone oxidoreductase (402 aa).

Residues 12-16 (GAGYA), 39-40 (NK), and Val-83 contribute to the FAD site. Glu-172 is a catalytic residue. FAD-binding positions include Asp-302, 319-320 (AQ), and Lys-379.

This sequence belongs to the NADH dehydrogenase family. FAD serves as cofactor.

The protein localises to the cell membrane. The enzyme catalyses a quinone + NADH + H(+) = a quinol + NAD(+). In terms of biological role, alternative, nonproton pumping NADH:quinone oxidoreductase that delivers electrons to the respiratory chain by oxidation of NADH and reduction of quinones, and contributes to the regeneration of NAD(+). This is Type II NADH:quinone oxidoreductase from Staphylococcus saprophyticus subsp. saprophyticus (strain ATCC 15305 / DSM 20229 / NCIMB 8711 / NCTC 7292 / S-41).